A 125-amino-acid polypeptide reads, in one-letter code: Small ribosomal subunit protein uS12m (125 aa).

The disordered stretch occupies residues 1 to 26 (MPTINQLLRKKSSRQAPKLKSKKPAL). Over residues 8–23 (LRKKSSRQAPKLKSKK) the composition is skewed to basic residues.

The protein belongs to the universal ribosomal protein uS12 family.

It is found in the mitochondrion. The sequence is that of Small ribosomal subunit protein uS12m (RPS12) from Prototheca wickerhamii.